Reading from the N-terminus, the 386-residue chain is G2/mitotic-specific cyclin-B2 (386 aa).

A disordered region spans residues 45 to 64 (TNGKVGPSKKPSKASCAQKP).

The protein belongs to the cyclin family. Cyclin AB subfamily. Interacts with the CDK1 protein kinase to form a serine/threonine kinase holoenzyme complex also known as maturation promoting factor (MPF). The cyclin subunit imparts substrate specificity to the complex.

Its function is as follows. Essential for the control of the cell cycle at the G2/M (mitosis) transition. This is G2/mitotic-specific cyclin-B2 (ccnb2) from Oryzias luzonensis (Luzon ricefish).